The sequence spans 502 residues: Chromosomal replication initiator protein DnaA (502 aa).

A domain I, interacts with DnaA modulators region spans residues 1-112; the sequence is MADDLSLGFT…PSTDHIDDNS (112 aa). The domain II stretch occupies residues 113–161; sequence SSADVLLTDDCGTDTDENYGEPLTGEYQGLPTYFTERPHHTESTVTGGT. Positions 162–378 are domain III, AAA+ region; that stretch reads SLNRRYTFET…GALIRVTAFA (217 aa). G206, G208, K209, and T210 together coordinate ATP. Residues 379-502 form a domain IV, binds dsDNA region; sequence SLNKTAIDKA…TTRIRQRSKR (124 aa).

Belongs to the DnaA family. In terms of assembly, oligomerizes as a right-handed, spiral filament on DNA at oriC.

Its subcellular location is the cytoplasm. Plays an essential role in the initiation and regulation of chromosomal replication. ATP-DnaA binds to the origin of replication (oriC) to initiate formation of the DNA replication initiation complex once per cell cycle. Binds the DnaA box (a 9 base pair repeat at the origin) and separates the double-stranded (ds)DNA. Forms a right-handed helical filament on oriC DNA; dsDNA binds to the exterior of the filament while single-stranded (ss)DNA is stabiized in the filament's interior. The ATP-DnaA-oriC complex binds and stabilizes one strand of the AT-rich DNA unwinding element (DUE), permitting loading of DNA polymerase. After initiation quickly degrades to an ADP-DnaA complex that is not apt for DNA replication. Binds acidic phospholipids. The polypeptide is Chromosomal replication initiator protein DnaA (Mycobacterium leprae (strain TN)).